The primary structure comprises 353 residues: Ribosomal RNA small subunit methyltransferase H (353 aa).

Residues G50–Y52, D69, F96, D117, and Q124 each bind S-adenosyl-L-methionine. The disordered stretch occupies residues A276 to R353.

It belongs to the methyltransferase superfamily. RsmH family.

The protein resides in the cytoplasm. It catalyses the reaction cytidine(1402) in 16S rRNA + S-adenosyl-L-methionine = N(4)-methylcytidine(1402) in 16S rRNA + S-adenosyl-L-homocysteine + H(+). Specifically methylates the N4 position of cytidine in position 1402 (C1402) of 16S rRNA. The protein is Ribosomal RNA small subunit methyltransferase H of Methylorubrum extorquens (strain CM4 / NCIMB 13688) (Methylobacterium extorquens).